A 251-amino-acid polypeptide reads, in one-letter code: Imidazole glycerol phosphate synthase subunit HisF (251 aa).

Active-site residues include D13 and D132.

Belongs to the HisA/HisF family. Heterodimer of HisH and HisF.

The protein localises to the cytoplasm. It carries out the reaction 5-[(5-phospho-1-deoxy-D-ribulos-1-ylimino)methylamino]-1-(5-phospho-beta-D-ribosyl)imidazole-4-carboxamide + L-glutamine = D-erythro-1-(imidazol-4-yl)glycerol 3-phosphate + 5-amino-1-(5-phospho-beta-D-ribosyl)imidazole-4-carboxamide + L-glutamate + H(+). It participates in amino-acid biosynthesis; L-histidine biosynthesis; L-histidine from 5-phospho-alpha-D-ribose 1-diphosphate: step 5/9. IGPS catalyzes the conversion of PRFAR and glutamine to IGP, AICAR and glutamate. The HisF subunit catalyzes the cyclization activity that produces IGP and AICAR from PRFAR using the ammonia provided by the HisH subunit. In Campylobacter concisus (strain 13826), this protein is Imidazole glycerol phosphate synthase subunit HisF.